We begin with the raw amino-acid sequence, 779 residues long: Probable ATP-dependent RNA helicase DHX40 (779 aa).

The tract at residues 1–53 is disordered; sequence MSRFPAVAGRAPRRQEEGERSRDLQEERPSAVCIADREEKGCTSQEGGTTPTF. A compositionally biased stretch (basic and acidic residues) spans 13–41; it reads RRQEEGERSRDLQEERPSAVCIADREEKG. Positions 42-53 are enriched in polar residues; that stretch reads CTSQEGGTTPTF. The Helicase ATP-binding domain occupies 63 to 231; the sequence is IQAVRDNSFL…FGNCPIFDIP (169 aa). ATP is bound at residue 76 to 83; the sequence is GNTGSGKT. The DEAH box signature appears at 173–176; sequence DEAH. Residues 263–442 enclose the Helicase C-terminal domain; sequence TMDIHLNEMA…SVVLTLKCLA (180 aa). The tract at residues 737-779 is disordered; it reads SKDVLKKMQRRNDDKSISDARARFLERKQQRTQDHSDTRKETG.

Belongs to the DEAD box helicase family. DEAH subfamily.

It catalyses the reaction ATP + H2O = ADP + phosphate + H(+). Its function is as follows. Probable ATP-dependent RNA helicase. In Pongo abelii (Sumatran orangutan), this protein is Probable ATP-dependent RNA helicase DHX40 (DHX40).